The sequence spans 242 residues: MIILPAIDLKEGKCIRLYQGDFKASKVVAEDPIEVALKFKENGAEYIHIVDLDGALTGEIKNLSIISSIIKTINIPVELGGGIRNLNTIDMLIGAGIERVILGTAALNNRGLVEEAVKKYDEKIAIGIDAKNEKVAINGWLNVSSINYIDFAKEMEKIGVRNIIFTDISKDGTLKGPNLKQLEKLNESINCNVIASGGIKDIEDLKGIKEMDVYGAIVGKAIYSGNINLNEAIKIINKGSSK.

The Proton acceptor role is filled by D8. D129 serves as the catalytic Proton donor.

The protein belongs to the HisA/HisF family.

Its subcellular location is the cytoplasm. It catalyses the reaction 1-(5-phospho-beta-D-ribosyl)-5-[(5-phospho-beta-D-ribosylamino)methylideneamino]imidazole-4-carboxamide = 5-[(5-phospho-1-deoxy-D-ribulos-1-ylimino)methylamino]-1-(5-phospho-beta-D-ribosyl)imidazole-4-carboxamide. It functions in the pathway amino-acid biosynthesis; L-histidine biosynthesis; L-histidine from 5-phospho-alpha-D-ribose 1-diphosphate: step 4/9. The sequence is that of 1-(5-phosphoribosyl)-5-[(5-phosphoribosylamino)methylideneamino] imidazole-4-carboxamide isomerase from Clostridium botulinum (strain ATCC 19397 / Type A).